The primary structure comprises 251 residues: Protein unc-119 homolog B (251 aa).

The span at 1–13 (MSGSNPKAATAGS) shows a compositional bias: polar residues. Positions 1-56 (MSGSNPKAATAGSQAGPGGLVAGKEEKKKAGGGVLNRLKARRQGPPHTPDDGSGAA) are disordered. Ser-2 carries the post-translational modification N-acetylserine. Lys-24 carries the post-translational modification N6-acetyllysine. Tyr-142 contacts tetradecanoate.

It belongs to the PDE6D/unc-119 family. As to quaternary structure, found in a complex with ARL3, RP2 and UNC119B; RP2 induces hydrolysis of GTP ARL3 in the complex, leading to the release of UNC119B. Interacts with NPHP3 (when myristoylated). Interacts with CYS1 (when myristoylated). Interacts with MACIR; interaction only takes place when UNC119B is not liganded with myristoylated proteins.

It is found in the cell projection. The protein localises to the cilium. Myristoyl-binding protein that acts as a cargo adapter: specifically binds the myristoyl moiety of a subset of N-terminally myristoylated proteins and is required for their localization. Binds myristoylated NPHP3 and plays a key role in localization of NPHP3 to the primary cilium membrane. Does not bind all myristoylated proteins. Probably plays a role in trafficking proteins in photoreceptor cells. The sequence is that of Protein unc-119 homolog B (Unc119b) from Mus musculus (Mouse).